We begin with the raw amino-acid sequence, 259 residues long: Bisphosphoglycerate mutase (259 aa).

Serine 2 carries the N-acetylserine modification. Substrate is bound by residues arginine 10–asparagine 17, cysteine 23–serine 24, arginine 62, glutamate 89–tyrosine 92, arginine 100, and arginine 116–arginine 117. The Tele-phosphohistidine intermediate role is filled by histidine 11. Glutamate 89 functions as the Proton donor/acceptor in the catalytic mechanism. At threonine 122 the chain carries Phosphothreonine. Glycine 189–asparagine 190 contacts substrate.

It belongs to the phosphoglycerate mutase family. BPG-dependent PGAM subfamily. Homodimer. Expressed in red blood cells.

It carries out the reaction (2R)-3-phospho-glyceroyl phosphate = (2R)-2,3-bisphosphoglycerate + H(+). The enzyme catalyses (2R)-2-phosphoglycerate = (2R)-3-phosphoglycerate. With respect to regulation, at alkaline pH BPGM favors the synthase reaction; however, at lower pH the phosphatase reaction is dominant. Inhibited by citrate. Plays a major role in regulating hemoglobin oxygen affinity by controlling the levels of its allosteric effector 2,3-bisphosphoglycerate (2,3-BPG). Also exhibits mutase (EC 5.4.2.11) activity. This chain is Bisphosphoglycerate mutase (BPGM), found in Oryctolagus cuniculus (Rabbit).